Consider the following 313-residue polypeptide: Beta-ketoacyl-[acyl-carrier-protein] synthase III (313 aa).

Active-site residues include Cys-112 and His-238. Positions 239-243 (QANIR) are ACP-binding. Residue Asn-268 is part of the active site.

The protein belongs to the thiolase-like superfamily. FabH family. In terms of assembly, homodimer.

The protein localises to the cytoplasm. The enzyme catalyses malonyl-[ACP] + acetyl-CoA + H(+) = 3-oxobutanoyl-[ACP] + CO2 + CoA. The protein operates within lipid metabolism; fatty acid biosynthesis. Its function is as follows. Catalyzes the condensation reaction of fatty acid synthesis by the addition to an acyl acceptor of two carbons from malonyl-ACP. Catalyzes the first condensation reaction which initiates fatty acid synthesis and may therefore play a role in governing the total rate of fatty acid production. Possesses both acetoacetyl-ACP synthase and acetyl transacylase activities. Its substrate specificity determines the biosynthesis of branched-chain and/or straight-chain of fatty acids. The chain is Beta-ketoacyl-[acyl-carrier-protein] synthase III from Staphylococcus aureus (strain COL).